The sequence spans 185 residues: ATP-dependent protease subunit HslV (185 aa).

T12 is an active-site residue. The Na(+) site is built by A168, C171, and T174.

The protein belongs to the peptidase T1B family. HslV subfamily. In terms of assembly, a double ring-shaped homohexamer of HslV is capped on each side by a ring-shaped HslU homohexamer. The assembly of the HslU/HslV complex is dependent on binding of ATP.

Its subcellular location is the cytoplasm. The enzyme catalyses ATP-dependent cleavage of peptide bonds with broad specificity.. Allosterically activated by HslU binding. In terms of biological role, protease subunit of a proteasome-like degradation complex believed to be a general protein degrading machinery. The sequence is that of ATP-dependent protease subunit HslV from Dinoroseobacter shibae (strain DSM 16493 / NCIMB 14021 / DFL 12).